Reading from the N-terminus, the 124-residue chain is Fluoride-specific ion channel FluC 2 (124 aa).

4 helical membrane-spanning segments follow: residues 1 to 21, 34 to 54, 66 to 86, and 103 to 123; these read MSDI…RFQI, FLIL…LSLV, LILF…SFVY, and LFII…FLGT. Na(+) is bound by residues Gly-76 and Ser-79.

Belongs to the fluoride channel Fluc/FEX (TC 1.A.43) family.

It localises to the cell inner membrane. The catalysed reaction is fluoride(in) = fluoride(out). With respect to regulation, na(+) is not transported, but it plays an essential structural role and its presence is essential for fluoride channel function. Its function is as follows. Fluoride-specific ion channel. Important for reducing fluoride concentration in the cell, thus reducing its toxicity. This is Fluoride-specific ion channel FluC 2 from Prochlorococcus marinus (strain NATL2A).